Reading from the N-terminus, the 86-residue chain is Dynein light chain 1, cytoplasmic (86 aa).

It belongs to the dynein light chain family. In terms of assembly, homodimer. Cytoplasmic dynein consists of two catalytic heavy chains (HCs) and a number of non-catalytic subunits which present intermediate chains (ICs), light intermediate chains (LICs) and light chains (LCs). Component of the nuclear pore complex (NPC). NPC constitutes the exclusive means of nucleocytoplasmic transport. NPCs allow the passive diffusion of ions and small molecules and the active, nuclear transport receptor-mediated bidirectional transport of macromolecules such as proteins, RNAs, ribonucleoparticles (RNPs), and ribosomal subunits across the nuclear envelope. Due to its 8-fold rotational symmetry, all subunits are present with 8 copies or multiples thereof.

Its subcellular location is the cytoplasm. It localises to the cytoskeleton. The protein localises to the nucleus. It is found in the nuclear pore complex. Its function is as follows. Acts as one of several non-catalytic accessory components of the cytoplasmic dynein complex that are thought to be involved in linking dynein to cargos and to adapter proteins that regulate dynein function. Cytoplasmic dynein 1 acts as a motor for the intracellular retrograde motility of vesicles and organelles along microtubules. May play a role in changing or maintaining the spatial distribution of cytoskeletal structures. Also a component of the nuclear pore complex. The sequence is that of Dynein light chain 1, cytoplasmic (DYN2) from Candida glabrata (strain ATCC 2001 / BCRC 20586 / JCM 3761 / NBRC 0622 / NRRL Y-65 / CBS 138) (Yeast).